A 212-amino-acid polypeptide reads, in one-letter code: tRNA(Phe) 7-((3-amino-3-carboxypropyl)-4-demethylwyosine(37)-N(4))-methyltransferase 2 (212 aa).

Belongs to the TYW3 family.

It catalyses the reaction 4-demethyl-7-[(3S)-3-amino-3-carboxypropyl]wyosine(37) in tRNA(Phe) + S-adenosyl-L-methionine = 7-[(3S)-3-amino-3-carboxypropyl]wyosine(37) in tRNA(Phe) + S-adenosyl-L-homocysteine + H(+). Functionally, S-adenosyl-L-methionine-dependent methyltransferase that acts as a component of the wyosine derivatives biosynthesis pathway. Probably methylates N-4 position of wybutosine-86 to produce wybutosine-72. This is tRNA(Phe) 7-((3-amino-3-carboxypropyl)-4-demethylwyosine(37)-N(4))-methyltransferase 2 from Thermococcus kodakarensis (strain ATCC BAA-918 / JCM 12380 / KOD1) (Pyrococcus kodakaraensis (strain KOD1)).